We begin with the raw amino-acid sequence, 417 residues long: Cotranscriptional regulator ARB2A (417 aa).

Positions 1–18 (MSISLSSLIFLPIWINMA) are cleaved as a signal peptide. Asn26 is a glycosylation site (N-linked (GlcNAc...) asparagine). Residues 208-248 (KQKMHKQSSSSDGTDEPAGKRERRDKVSKETKKRRDFYEKY) form a disordered region. The segment covering 224–237 (PAGKRERRDKVSKE) has biased composition (basic and acidic residues). The active-site Nucleophile is Ser294. The interval 398 to 417 (SSSQKPALTRRSHRIKHEEL) is disordered. Residues 405-417 (LTRRSHRIKHEEL) are compositionally biased toward basic residues. The Prevents secretion from ER signature appears at 414–417 (HEEL).

Belongs to the ARB2A family. In terms of assembly, interacts with AGO2. Found in a complex, composed of AGO2, CHD7 and ARB2A.

It localises to the nucleus. It is found in the cytoplasm. Its subcellular location is the endoplasmic reticulum. Plays a role in the regulation of alternative splicing, by interacting with AGO2 and CHD7. Seems to be required for stabilizing protein-protein interactions at the chromatin-spliceosome interface. May have hydrolase activity. In Mus musculus (Mouse), this protein is Cotranscriptional regulator ARB2A (Arb2a).